The sequence spans 302 residues: Zinc transporter ZIP1 (302 aa).

At 1 to 6 (MDYLLQ) the chain is on the extracellular side. Residues 7–27 (VKVGALVGLLLLTLFFGFIPA) traverse the membrane as a helical segment. Over 28–44 (RMKWFHVTGGTELHKAV) the chain is Cytoplasmic. Residues 45–65 (LSFVSCFAGGVFLSACLLDII) traverse the membrane as a helical segment. Residues 66 to 86 (PDYLSDIHGELQKRDLDDGFP) are Extracellular-facing. A helical transmembrane segment spans residues 87–107 (LPEFIMACGFFTVLILEKMVL). Over 108–158 (SCTEGHRNEETAPLLAPAAPNGHAHGHPSVNDLEGSGHHVHVDFHAHSSFR) the chain is Cytoplasmic. Residues 159 to 179 (SFMLFLSLSLHSVFEGLAIGL) traverse the membrane as a helical segment. Residues 180-185 (QTTNAK) lie on the Extracellular side of the membrane. A helical membrane pass occupies residues 186 to 206 (VLEICIAILVHKSIIVFSLSV). The Cytoplasmic segment spans residues 207–219 (KLVQSAVKPLWVV). A helical membrane pass occupies residues 220–240 (LYVTVFAIMSPLGIGIGIVVI). The Extracellular portion of the chain corresponds to 241–247 (ETERQAG). The chain crosses the membrane as a helical span at residues 248–268 (GLIQAVLEGLAAGTFIYITFL). Over 269–281 (EILPHELNSSERP) the chain is Cytoplasmic. The chain crosses the membrane as a helical span at residues 282–302 (LLKVLFLLCGFSIMAALCFLG).

The protein belongs to the ZIP transporter (TC 2.A.5) family. Ubiquitous. Highest levels in ovary, high levels in heart, eye, kidney and brain, moderate levels in intestine and low levels in gill and skin.

The protein resides in the cell membrane. The protein localises to the endoplasmic reticulum membrane. It catalyses the reaction Zn(2+)(in) = Zn(2+)(out). Its function is as follows. Transporter for the divalent cation Zn(2+). Mediates the influx of Zn(2+) into cells from extracellular space. The sequence is that of Zinc transporter ZIP1 (slc39a1) from Danio rerio (Zebrafish).